The sequence spans 219 residues: Thiamine-phosphate synthase (219 aa).

Residues 44-48 and asparagine 79 each bind 4-amino-2-methyl-5-(diphosphooxymethyl)pyrimidine; that span reads QFREK. Residues aspartate 80 and aspartate 99 each coordinate Mg(2+). Residue serine 117 participates in 4-amino-2-methyl-5-(diphosphooxymethyl)pyrimidine binding. 143–145 provides a ligand contact to 2-[(2R,5Z)-2-carboxy-4-methylthiazol-5(2H)-ylidene]ethyl phosphate; that stretch reads TST. Lysine 146 contacts 4-amino-2-methyl-5-(diphosphooxymethyl)pyrimidine. 2-[(2R,5Z)-2-carboxy-4-methylthiazol-5(2H)-ylidene]ethyl phosphate is bound by residues glycine 175 and 195-196; that span reads IS.

Belongs to the thiamine-phosphate synthase family. Requires Mg(2+) as cofactor.

It carries out the reaction 2-[(2R,5Z)-2-carboxy-4-methylthiazol-5(2H)-ylidene]ethyl phosphate + 4-amino-2-methyl-5-(diphosphooxymethyl)pyrimidine + 2 H(+) = thiamine phosphate + CO2 + diphosphate. The enzyme catalyses 2-(2-carboxy-4-methylthiazol-5-yl)ethyl phosphate + 4-amino-2-methyl-5-(diphosphooxymethyl)pyrimidine + 2 H(+) = thiamine phosphate + CO2 + diphosphate. The catalysed reaction is 4-methyl-5-(2-phosphooxyethyl)-thiazole + 4-amino-2-methyl-5-(diphosphooxymethyl)pyrimidine + H(+) = thiamine phosphate + diphosphate. The protein operates within cofactor biosynthesis; thiamine diphosphate biosynthesis; thiamine phosphate from 4-amino-2-methyl-5-diphosphomethylpyrimidine and 4-methyl-5-(2-phosphoethyl)-thiazole: step 1/1. Functionally, condenses 4-methyl-5-(beta-hydroxyethyl)thiazole monophosphate (THZ-P) and 2-methyl-4-amino-5-hydroxymethyl pyrimidine pyrophosphate (HMP-PP) to form thiamine monophosphate (TMP). This is Thiamine-phosphate synthase from Bacillus cereus (strain ATCC 14579 / DSM 31 / CCUG 7414 / JCM 2152 / NBRC 15305 / NCIMB 9373 / NCTC 2599 / NRRL B-3711).